A 309-amino-acid polypeptide reads, in one-letter code: Glutaminase (309 aa).

The substrate site is built by S64, N114, E160, N167, Y191, Y243, and V261.

It belongs to the glutaminase family. Homotetramer.

It catalyses the reaction L-glutamine + H2O = L-glutamate + NH4(+). The protein is Glutaminase of Rhizobium johnstonii (strain DSM 114642 / LMG 32736 / 3841) (Rhizobium leguminosarum bv. viciae).